The following is a 119-amino-acid chain: Holo-[acyl-carrier-protein] synthase (119 aa).

Residues aspartate 8 and glutamate 58 each contribute to the Mg(2+) site.

Belongs to the P-Pant transferase superfamily. AcpS family. Requires Mg(2+) as cofactor.

The protein resides in the cytoplasm. It carries out the reaction apo-[ACP] + CoA = holo-[ACP] + adenosine 3',5'-bisphosphate + H(+). In terms of biological role, transfers the 4'-phosphopantetheine moiety from coenzyme A to a Ser of acyl-carrier-protein. This Bacillus cytotoxicus (strain DSM 22905 / CIP 110041 / 391-98 / NVH 391-98) protein is Holo-[acyl-carrier-protein] synthase.